The primary structure comprises 148 residues: uncharacterized protein (148 aa).

Disordered regions lie at residues 1 to 86 and 122 to 148; these read MCPP…VQSP and RAHR…TSPC. The span at 38–57 shows a compositional bias: basic residues; it reads RPPKMQRRPRPPVAKRRRFP. Residues 134–148 are compositionally biased toward polar residues; the sequence is QSRQRPSPDSQTSPC.

This sequence belongs to the Epstein-Barr virus BLLF2 family.

This is an uncharacterized protein from Homo sapiens (Human).